The primary structure comprises 637 residues: Chaperone protein HtpG (637 aa).

The segment at 1 to 335 (MQGTVNSERL…SSDLPLNISR (335 aa)) is a; substrate-binding. Residues 336-559 (ETLQNNKIIE…DGSMDIRMER (224 aa)) are b. The c stretch occupies residues 560–637 (FLREQKQLNY…RMNNVLSQIN (78 aa)).

Belongs to the heat shock protein 90 family. As to quaternary structure, homodimer.

The protein resides in the cytoplasm. Functionally, molecular chaperone. Has ATPase activity. This Ehrlichia ruminantium (strain Welgevonden) protein is Chaperone protein HtpG.